The following is a 284-amino-acid chain: uncharacterized protein (284 aa).

Residues M1–M10 are compositionally biased toward polar residues. Residues M1–Q28 form a disordered region.

This is an uncharacterized protein from Escherichia coli (strain K12).